The sequence spans 205 residues: Glutathione peroxidase 1 (205 aa).

Position 37 is a phosphoserine (serine 37). Residue selenocysteine 52 is part of the active site. Position 52 (selenocysteine 52) is a non-standard amino acid, selenocysteine. Lysine 91 and lysine 117 each carry N6-acetyllysine; alternate. Lysine 91 and lysine 117 each carry N6-succinyllysine; alternate. An N-linked (Glc) (glycation) lysine; in vitro glycan is attached at lysine 117. Position 124 is an N6-acetyllysine (lysine 124). At lysine 151 the chain carries N6-acetyllysine; alternate. N6-succinyllysine; alternate is present on lysine 151. Phosphoserine occurs at positions 200 and 204.

The protein belongs to the glutathione peroxidase family. As to quaternary structure, homotetramer. Interacts with MIEN1. Post-translationally, during periods of oxidative stress, Sec-52 may react with a superoxide radical, irreversibly lose hydroselenide and be converted to dehydroalanine.

It localises to the cytoplasm. It is found in the mitochondrion. It carries out the reaction 2 glutathione + H2O2 = glutathione disulfide + 2 H2O. The enzyme catalyses a hydroperoxy polyunsaturated fatty acid + 2 glutathione = a hydroxy polyunsaturated fatty acid + glutathione disulfide + H2O. The catalysed reaction is tert-butyl hydroperoxide + 2 glutathione = tert-butanol + glutathione disulfide + H2O. It catalyses the reaction cumene hydroperoxide + 2 glutathione = 2-phenylpropan-2-ol + glutathione disulfide + H2O. It carries out the reaction (13S)-hydroperoxy-(9Z,11E)-octadecadienoate + 2 glutathione = (13S)-hydroxy-(9Z,11E)-octadecadienoate + glutathione disulfide + H2O. The enzyme catalyses (9S)-hydroperoxy-(10E,12Z)-octadecadienoate + 2 glutathione = (9S)-hydroxy-(10E,12Z)-octadecadienoate + glutathione disulfide + H2O. The catalysed reaction is (5S)-hydroperoxy-(6E,8Z,11Z,14Z)-eicosatetraenoate + 2 glutathione = (5S)-hydroxy-(6E,8Z,11Z,14Z)-eicosatetraenoate + glutathione disulfide + H2O. It catalyses the reaction (12S)-hydroperoxy-(5Z,8Z,10E,14Z)-eicosatetraenoate + 2 glutathione = (12S)-hydroxy-(5Z,8Z,10E,14Z)-eicosatetraenoate + glutathione disulfide + H2O. It carries out the reaction (12R)-hydroperoxy-(5Z,8Z,10E,14Z)-eicosatetraenoate + 2 glutathione = (12R)-hydroxy-(5Z,8Z,10E,14Z)-eicosatetraenoate + glutathione disulfide + H2O. The enzyme catalyses (15S)-hydroperoxy-(5Z,8Z,11Z,13E)-eicosatetraenoate + 2 glutathione = (15S)-hydroxy-(5Z,8Z,11Z,13E)-eicosatetraenoate + glutathione disulfide + H2O. The catalysed reaction is (5S)-hydroperoxy-(6E,8Z,11Z,14Z,17Z)-eicosapentaenoate + 2 glutathione = (5S)-hydroxy-(6E,8Z,11Z,14Z,17Z)-eicosapentaenoate + glutathione disulfide + H2O. It catalyses the reaction (15S)-hydroperoxy-(5Z,8Z,11Z,13E,17Z)-eicosapentaenoate + 2 glutathione = (15S)-hydroxy-(5Z,8Z,11Z,13E,17Z)-eicosapentaenoate + glutathione disulfide + H2O. It carries out the reaction (15S)-hydroperoxy-(11Z,13E)-eicosadienoate + 2 glutathione = (15S)-hydroxy-(11Z,13E)-eicosadienoate + glutathione disulfide + H2O. The enzyme catalyses (17S)-hydroperoxy-(4Z,7Z,10Z,13Z,15E,19Z)-docosahexaenoate + 2 glutathione = (17S)-hydroxy-(4Z,7Z,10Z,13Z,15E,19Z)-docosahexaenoate + glutathione disulfide + H2O. In terms of biological role, catalyzes the reduction of hydroperoxides in a glutathione-dependent manner thus regulating cellular redox homeostasis. Can reduce small soluble hydroperoxides such as H2O2, cumene hydroperoxide and tert-butyl hydroperoxide, as well as several fatty acid-derived hydroperoxides. In platelets catalyzes the reduction of 12-hydroperoxyeicosatetraenoic acid, the primary product of the arachidonate 12-lipoxygenase pathway. This is Glutathione peroxidase 1 (GPX1) from Bos taurus (Bovine).